The following is a 1170-amino-acid chain: Histone-lysine N-methyltransferase, H3 lysine-4 specific (1170 aa).

The tract at residues 1–382 (MANGSDTKPV…TSSKSNKKPY (382 aa)) is disordered. Basic and acidic residues-rich tracts occupy residues 17–188 (ARAD…DPKG), 198–226 (PSRD…DRDL), and 242–276 (RDGR…KEKG). Polar residues predominate over residues 278–294 (VISTPQTAPTPRLTPTN). Over residues 302-311 (SQPPAPPSPP) the composition is skewed to pro residues. Basic and acidic residues-rich tracts occupy residues 316–325 (FPKEVWETVG) and 337–365 (ELSK…DPRS). The 87-residue stretch at 403 to 489 (TQIIVKGLSS…AKYRVEPDED (87 aa)) folds into the RRM domain. Disordered regions lie at residues 625–646 (APKT…PPKE) and 687–843 (QDPE…TLDT). The segment covering 731-742 (KGDPTKKKDATK) has biased composition (basic and acidic residues). Residues 811 to 836 (NESEEEEEVEDDMEEEEDETAQEELQ) show a composition bias toward acidic residues. Residues 995 to 1000 (RANNRR) carry the RxxxRR motif motif. An SET domain is found at 1029-1146 (KPVKFARSAI…ANEELTYDYK (118 aa)). Tyr1145 provides a ligand contact to S-adenosyl-L-methionine. In terms of domain architecture, Post-SET spans 1154-1170 (ERIPCLCGAPGCKGYLN).

This sequence belongs to the class V-like SAM-binding methyltransferase superfamily. Component of the Set1C/COMPASS complex.

It is found in the nucleus. It localises to the chromosome. The enzyme catalyses L-lysyl(4)-[histone H3] + 3 S-adenosyl-L-methionine = N(6),N(6),N(6)-trimethyl-L-lysyl(4)-[histone H3] + 3 S-adenosyl-L-homocysteine + 3 H(+). It carries out the reaction N(6)-methyl-L-lysyl(4)-[histone H3] + S-adenosyl-L-methionine = N(6),N(6)-dimethyl-L-lysyl(4)-[histone H3] + S-adenosyl-L-homocysteine + H(+). The catalysed reaction is N(6),N(6)-dimethyl-L-lysyl(4)-[histone H3] + S-adenosyl-L-methionine = N(6),N(6),N(6)-trimethyl-L-lysyl(4)-[histone H3] + S-adenosyl-L-homocysteine + H(+). Catalytic component of the COMPASS (Set1C) complex that specifically mono-, di- and trimethylates histone H3 to form H3K4me1/2/3. Binds RNAs which might negatively affect its histone methyltransferase activity. COMPASS recognizes ubiquitinated H2B on one face of the nucleosome which stimulates the methylation of H3 on the opposing face. In Yarrowia lipolytica (strain CLIB 122 / E 150) (Yeast), this protein is Histone-lysine N-methyltransferase, H3 lysine-4 specific (SET1).